A 348-amino-acid chain; its full sequence is MDNFFMTWLLPLFIVVGKTLLLLTVLLVLIAYLLYADRKIWAAVQLRRGPNVVGPWGLLQSFADLIKFVVKEPIIPSGANKGVFLLAPFVSATLALSAWAVVPVNEGWEIASINVGLLYILAISSLEVYGVIMGGWASNSKYPFLGALRSAAQMVSYEVSIGFVLVTVILVSGSLDLTTIVQEQNKGLGTYLGLPFSSLLDWNWLILFPMFIIFFISALAETNRPPFDLVEAESELVAGHMVEYSSTPYMLFFLGEYVAIVLMCALTTILFLGGWLPPLDVWWLNWVPGVIWFVLKVCFVFFWFAMVKAFVPRYRYDQLMRLGWKVFLPISLAMVVITAAILKYTSFA.

A run of 8 helical transmembrane segments spans residues 10-30 (LPLF…LVLI), 82-102 (GVFL…WAVV), 115-135 (VGLL…IMGG), 161-181 (IGFV…TTIV), 199-219 (LLDW…ISAL), 251-271 (LFFL…TILF), 287-307 (VPGV…FAMV), and 322-342 (LGWK…AAIL).

Belongs to the complex I subunit 1 family. NDH-1 is composed of 14 different subunits. Subunits NuoA, H, J, K, L, M, N constitute the membrane sector of the complex.

It localises to the cell inner membrane. It catalyses the reaction a quinone + NADH + 5 H(+)(in) = a quinol + NAD(+) + 4 H(+)(out). NDH-1 shuttles electrons from NADH, via FMN and iron-sulfur (Fe-S) centers, to quinones in the respiratory chain. The immediate electron acceptor for the enzyme in this species is believed to be ubiquinone. Couples the redox reaction to proton translocation (for every two electrons transferred, four hydrogen ions are translocated across the cytoplasmic membrane), and thus conserves the redox energy in a proton gradient. This subunit may bind ubiquinone. This chain is NADH-quinone oxidoreductase subunit H, found in Bartonella bacilliformis (strain ATCC 35685 / KC583 / Herrer 020/F12,63).